Consider the following 339-residue polypeptide: Nicotinate-nucleotide--dimethylbenzimidazole phosphoribosyltransferase (339 aa).

Residue Glu-306 is the Proton acceptor of the active site.

Belongs to the CobT family.

It carries out the reaction 5,6-dimethylbenzimidazole + nicotinate beta-D-ribonucleotide = alpha-ribazole 5'-phosphate + nicotinate + H(+). It functions in the pathway nucleoside biosynthesis; alpha-ribazole biosynthesis; alpha-ribazole from 5,6-dimethylbenzimidazole: step 1/2. Functionally, catalyzes the synthesis of alpha-ribazole-5'-phosphate from nicotinate mononucleotide (NAMN) and 5,6-dimethylbenzimidazole (DMB). This Brucella melitensis biotype 2 (strain ATCC 23457) protein is Nicotinate-nucleotide--dimethylbenzimidazole phosphoribosyltransferase.